The chain runs to 1029 residues: Translation initiation factor IF-2 (1029 aa).

The disordered stretch occupies residues 73 to 441; the sequence is RELRSEEDDG…RQRRRERKRE (369 aa). 2 stretches are compositionally biased toward acidic residues: residues 106–121 and 148–177; these read TAEE…DEEE and AEAE…DEAE. The segment covering 183–196 has biased composition (basic and acidic residues); sequence AADKDAAAIADEQK. Acidic residues-rich tracts occupy residues 213–234, 242–258, and 279–322; these read TGEE…DAEA, TEAE…AEDV, and APDE…DEEG. Positions 358–372 are enriched in basic and acidic residues; the sequence is KDKDKDKSSKKDKKD. The segment covering 373–386 has biased composition (basic residues); that stretch reads KSNKKSKSKGKKQK. Positions 400–411 are enriched in low complexity; that stretch reads QTLQETLQELEQ. Residues 417-427 show a composition bias toward basic residues; it reads RQRRRRRRRKR. Positions 428-441 are enriched in basic and acidic residues; that stretch reads HEEERQRRRERKRE. In terms of domain architecture, tr-type G spans 524–696; sequence PRAPVVTVMG…LLQSEIMELK (173 aa). The interval 533-540 is G1; sequence GHVDHGKT. 533-540 contributes to the GTP binding site; that stretch reads GHVDHGKT. The tract at residues 558 to 562 is G2; the sequence is GITQH. The tract at residues 582 to 585 is G3; it reads DTPG. GTP contacts are provided by residues 582–586 and 636–639; these read DTPGH and NKMD. The G4 stretch occupies residues 636 to 639; the sequence is NKMD. The segment at 672 to 674 is G5; it reads SAK.

This sequence belongs to the TRAFAC class translation factor GTPase superfamily. Classic translation factor GTPase family. IF-2 subfamily.

Its subcellular location is the cytoplasm. Functionally, one of the essential components for the initiation of protein synthesis. Protects formylmethionyl-tRNA from spontaneous hydrolysis and promotes its binding to the 30S ribosomal subunits. Also involved in the hydrolysis of GTP during the formation of the 70S ribosomal complex. This chain is Translation initiation factor IF-2, found in Salinibacter ruber (strain DSM 13855 / M31).